A 580-amino-acid polypeptide reads, in one-letter code: Acyl-coenzyme A synthetase ACSM3, mitochondrial (580 aa).

A mitochondrion-targeting transit peptide spans 1 to 21; sequence MAMLLRARCFHRLAIPDPRRI. N6-succinyllysine occurs at positions 67 and 100. Lysine 151 is subject to N6-acetyllysine. ATP contacts are provided by residues 229 to 237, 368 to 373, aspartate 455, arginine 470, and lysine 566; these read TSGTTGPPK and EGYGQT.

It belongs to the ATP-dependent AMP-binding enzyme family. The cofactor is Mg(2+). Mn(2+) is required as a cofactor.

The protein localises to the mitochondrion. The protein resides in the mitochondrion matrix. The enzyme catalyses a medium-chain fatty acid + ATP + CoA = a medium-chain fatty acyl-CoA + AMP + diphosphate. It carries out the reaction propanoate + ATP + CoA = propanoyl-CoA + AMP + diphosphate. It catalyses the reaction butanoate + ATP + CoA = butanoyl-CoA + AMP + diphosphate. The catalysed reaction is 2-methylpropanoate + ATP + CoA = 2-methylpropanoyl-CoA + AMP + diphosphate. The enzyme catalyses 2-methylbutanoate + ATP + CoA = 2-methylbutanoyl-CoA + AMP + diphosphate. It carries out the reaction octanoate + ATP + CoA = octanoyl-CoA + AMP + diphosphate. Catalyzes the activation of fatty acids by CoA to produce an acyl-CoA, the first step in fatty acid metabolism. Capable of activating medium-chain fatty acids with a preference for isobutyrate among fatty acids with 2-6 carbon atoms. This chain is Acyl-coenzyme A synthetase ACSM3, mitochondrial (Acsm3), found in Rattus norvegicus (Rat).